Consider the following 1367-residue polypeptide: DNA polymerase III PolC-type (1367 aa).

An Exonuclease domain is found at phenylalanine 358 to phenylalanine 513.

The protein belongs to the DNA polymerase type-C family. PolC subfamily.

The protein localises to the cytoplasm. The catalysed reaction is DNA(n) + a 2'-deoxyribonucleoside 5'-triphosphate = DNA(n+1) + diphosphate. Required for replicative DNA synthesis. This DNA polymerase also exhibits 3' to 5' exonuclease activity. This is DNA polymerase III PolC-type from Thermotoga maritima (strain ATCC 43589 / DSM 3109 / JCM 10099 / NBRC 100826 / MSB8).